A 348-amino-acid chain; its full sequence is Dihydroorotate dehydrogenase (quinone) (348 aa).

Residues 65 to 69 (AGLDK) and Thr-89 contribute to the FMN site. Lys-69 lines the substrate pocket. Residue 114–118 (NRLGF) participates in substrate binding. Residues Asn-147 and Asn-180 each coordinate FMN. Asn-180 is a binding site for substrate. Ser-183 serves as the catalytic Nucleophile. Asn-185 contacts substrate. FMN contacts are provided by Lys-225 and Thr-253. 254–255 (NT) serves as a coordination point for substrate. FMN is bound by residues Gly-276, Gly-305, and 326-327 (YS).

Belongs to the dihydroorotate dehydrogenase family. Type 2 subfamily. Monomer. Requires FMN as cofactor.

The protein resides in the cell membrane. The enzyme catalyses (S)-dihydroorotate + a quinone = orotate + a quinol. Its pathway is pyrimidine metabolism; UMP biosynthesis via de novo pathway; orotate from (S)-dihydroorotate (quinone route): step 1/1. Functionally, catalyzes the conversion of dihydroorotate to orotate with quinone as electron acceptor. The polypeptide is Dihydroorotate dehydrogenase (quinone) (Delftia acidovorans (strain DSM 14801 / SPH-1)).